We begin with the raw amino-acid sequence, 651 residues long: A-type voltage-gated potassium channel KCND1 (651 aa).

At 1–183 (MAAGVATWLP…RAFENPHTST (183 aa)) the chain is on the cytoplasmic side. Residues 2 to 20 (AAGVATWLPFARAAAVGWL) form an interaction with KCNIP1, KCNIP2, and other family members region. The Zn(2+) site is built by His104, Cys131, and Cys132. Residues 144 to 164 (AERLAEDEEAEQAGEGPALPA) are disordered. Residues 184–205 (AALVFYYVTGFFIAVSVIANVV) traverse the membrane as a helical segment. Residues 206–230 (ETIPCRGTPRWPSKEQSCGDRFPTA) lie on the Extracellular side of the membrane. Residues 231 to 252 (FFCMDTACVLIFTGEYLLRLFA) form a helical membrane-spanning segment. The Cytoplasmic portion of the chain corresponds to 253–263 (APSRCRFLRSV). Residues 264-284 (MSLIDVVAILPYYIGLFVPKN) form a helical membrane-spanning segment. At 285–287 (DDV) the chain is on the extracellular side. Residues 288-308 (SGAFVTLRVFRVFRIFKFSRH) traverse the membrane as a helical; Voltage-sensor segment. Residues 309–323 (SQGLRILGYTLKSCA) lie on the Cytoplasmic side of the membrane. Residues 310–323 (QGLRILGYTLKSCA) are S4-S5 linker. A helical membrane pass occupies residues 324–345 (SELGFLLFSLTMAIIIFATVMF). The Extracellular portion of the chain corresponds to 346–359 (YAEKGTSKTNFTSI). Residue Asn355 is glycosylated (N-linked (GlcNAc...) asparagine). Residues 360–371 (PAAFWYTIVTMT) constitute an intramembrane region (helical). The short motif at 372–377 (TLGYGD) is the Selectivity filter element. Residues 372–379 (TLGYGDMV) lie within the membrane without spanning it. Over 380 to 386 (PSTIAGK) the chain is Extracellular. A helical membrane pass occupies residues 387–415 (IFGSICSLSGVLVIALPVPVIVSNFSRIY). Residues 416–651 (HQNQRADKRR…LPETVKISSL (236 aa)) are Cytoplasmic-facing. At Ser458 the chain carries Phosphoserine. Residues 474–489 (FEQQHHHLLHCLEKTT) are required for dendritic targeting. Position 555 is a phosphoserine (Ser555). Disordered regions lie at residues 566–585 (RRSPAPQTRSSLNAKPHDSL) and 601–651 (IPTP…ISSL). A compositionally biased stretch (polar residues) spans 626–637 (TPNTTLRNSSLG).

The protein belongs to the potassium channel family. D (Shal) (TC 1.A.1.2) subfamily. Kv4.1/KCND1 sub-subfamily. As to quaternary structure, component of heteromultimeric potassium channels. Identified in potassium channel complexes containing KCND1, KCND2, KCND3, KCNIP1, KCNIP2, KCNIP3, KCNIP4, DPP6 and DPP10.

It is found in the cell membrane. The enzyme catalyses K(+)(in) = K(+)(out). In terms of biological role, A-type voltage-gated potassium channel that mediates transmembrane potassium transport in excitable membranes in the brain. Mediates A-type current I(SA) in suprachiasmatic nucleus (SCN) neurons. Exhibits a low-threshold A-type current with a hyperpolarized steady-state inactivation midpoint and the recovery process was steeply voltage-dependent, with recovery being markedly faster at more negative potentials. May regulates repetitive firing rates in the suprachiasmatic nucleus (SCN) neurons and circadian rhythms in neuronal excitability and behavior. Contributes to the regulation of the circadian rhythm of action potential firing in suprachiasmatic nucleus neurons, which regulates the circadian rhythm of locomotor activity. The regulatory subunit KCNIP1 modulates the kinetics of channel inactivation, increases the current amplitudes and accelerates recovery from inactivation, shifts activation in a depolarizing direction. The regulatory subunit DPP10 decreases the voltage sensitivity of the inactivation channel gating. In Mus musculus (Mouse), this protein is A-type voltage-gated potassium channel KCND1.